The primary structure comprises 182 residues: Gas vesicle protein H1 (182 aa).

The segment covering 1 to 11 has biased composition (acidic residues); sequence MVPDENDDASD. 2 disordered regions span residues 1 to 21 and 65 to 106; these read MVPD…SGLL and GRAD…GGTS. Residues 12–21 show a composition bias toward low complexity; sequence DQSSQLSGLL. A compositionally biased stretch (basic and acidic residues) spans 92–101; it reads TTEDSIHVET.

Belongs to the gas vesicle GvpH family. GvpF to GvpM interact with each other in vitro, and may form multi-subunit complex(es). Interacts with GvpC1. Might interact with GvpA1.

Its subcellular location is the cytoplasm. It is found in the gas vesicle. Functionally, proteins GvpF to GvpM might be involved in nucleating gas vesicle formation. May be important for the stability of gas vesicles. Gas vesicles are hollow, gas filled proteinaceous nanostructures found in several microbial planktonic microorganisms. They allow positioning of halobacteria at the optimal depth for growth in the poorly aerated, shallow brine pools of their habitat. Expression of a 9.5 kb p-vac DNA fragment containing 2 divergently transcribed regions (gvpD-gvpE-gvpF-gvpG-gvpH-gvpI-gvpJ-gvpK-gvpL-gvpM and gvpA-gvpC-gvpN-gvpO) allows H.volcanii to produce gas vesicles. A similar region restores gas vesicle production in H.halobium without the p-vac locus, but it still has the c-vac locus. This Halobacterium salinarum (strain ATCC 700922 / JCM 11081 / NRC-1) (Halobacterium halobium) protein is Gas vesicle protein H1 (gvpH11).